A 145-amino-acid polypeptide reads, in one-letter code: D-aminoacyl-tRNA deacylase (145 aa).

A Gly-cisPro motif, important for rejection of L-amino acids motif is present at residues 137-138 (GP).

This sequence belongs to the DTD family. In terms of assembly, homodimer.

Its subcellular location is the cytoplasm. The catalysed reaction is glycyl-tRNA(Ala) + H2O = tRNA(Ala) + glycine + H(+). The enzyme catalyses a D-aminoacyl-tRNA + H2O = a tRNA + a D-alpha-amino acid + H(+). Functionally, an aminoacyl-tRNA editing enzyme that deacylates mischarged D-aminoacyl-tRNAs. Also deacylates mischarged glycyl-tRNA(Ala), protecting cells against glycine mischarging by AlaRS. Acts via tRNA-based rather than protein-based catalysis; rejects L-amino acids rather than detecting D-amino acids in the active site. By recycling D-aminoacyl-tRNA to D-amino acids and free tRNA molecules, this enzyme counteracts the toxicity associated with the formation of D-aminoacyl-tRNA entities in vivo and helps enforce protein L-homochirality. The protein is D-aminoacyl-tRNA deacylase of Chromohalobacter salexigens (strain ATCC BAA-138 / DSM 3043 / CIP 106854 / NCIMB 13768 / 1H11).